The sequence spans 470 residues: Ribosomal protein uS12 methylthiotransferase RimO (470 aa).

Residues 1 to 27 (MPCQAPHSDSNVKNPSEATNQKDHSPR) are disordered. Over residues 7–19 (HSDSNVKNPSEAT) the composition is skewed to polar residues. In terms of domain architecture, MTTase N-terminal spans 26 to 141 (PRVGFVSLGC…VMQAVHTHLP (116 aa)). Positions 35, 71, 100, 172, 176, and 179 each coordinate [4Fe-4S] cluster. In terms of domain architecture, Radical SAM core spans 158–399 (LTPKHYAYLK…MEVAEAVSAR (242 aa)). One can recognise a TRAM domain in the interval 402-470 (QRKVGQTLRV…ADGHDLWGEV (69 aa)).

Belongs to the methylthiotransferase family. RimO subfamily. [4Fe-4S] cluster is required as a cofactor.

It is found in the cytoplasm. The catalysed reaction is L-aspartate(89)-[ribosomal protein uS12]-hydrogen + (sulfur carrier)-SH + AH2 + 2 S-adenosyl-L-methionine = 3-methylsulfanyl-L-aspartate(89)-[ribosomal protein uS12]-hydrogen + (sulfur carrier)-H + 5'-deoxyadenosine + L-methionine + A + S-adenosyl-L-homocysteine + 2 H(+). In terms of biological role, catalyzes the methylthiolation of an aspartic acid residue of ribosomal protein uS12. The chain is Ribosomal protein uS12 methylthiotransferase RimO from Cupriavidus taiwanensis (strain DSM 17343 / BCRC 17206 / CCUG 44338 / CIP 107171 / LMG 19424 / R1) (Ralstonia taiwanensis (strain LMG 19424)).